The chain runs to 727 residues: Kinesin-like protein KIN-14G (727 aa).

Disordered regions lie at residues 100-156 (QTAP…LHLR), 172-194 (HLSAPSRSPTPPPNAVAPSSCSR), and 336-357 (LAGGARSGRRDNPRRQGTGATR). Residues 114-133 (VASSTAGRASRTKSASSTGR) show a composition bias toward polar residues. One can recognise a Kinesin motor domain in the interval 381-710 (NIRVFCRVRP…LRFAARVNSC (330 aa)). 461–468 (GQTGSGKT) contributes to the ATP binding site.

This sequence belongs to the TRAFAC class myosin-kinesin ATPase superfamily. Kinesin family. KIN-14 subfamily.

This Oryza sativa subsp. japonica (Rice) protein is Kinesin-like protein KIN-14G.